Here is a 367-residue protein sequence, read N- to C-terminus: Glutamate 5-kinase (367 aa).

K10 is an ATP binding site. Positions 137 and 149 each coordinate substrate. ATP contacts are provided by residues 169 to 170 and 211 to 217; these read TD and TGGMATK. The 79-residue stretch at 275-353 folds into the PUA domain; sequence AGEITVDDGA…QQISEILGYE (79 aa).

Belongs to the glutamate 5-kinase family.

It localises to the cytoplasm. It carries out the reaction L-glutamate + ATP = L-glutamyl 5-phosphate + ADP. The protein operates within amino-acid biosynthesis; L-proline biosynthesis; L-glutamate 5-semialdehyde from L-glutamate: step 1/2. In terms of biological role, catalyzes the transfer of a phosphate group to glutamate to form L-glutamate 5-phosphate. This chain is Glutamate 5-kinase, found in Yersinia pestis bv. Antiqua (strain Antiqua).